A 98-amino-acid chain; its full sequence is MTLFSSISSMSTSMSGSKSSIASFGSGTSMGSNSIACGGGCGGSGGILGSGLGLGLGLDLTGGSRSRGACGNGGNRGNGNGGMGGGNGSCCGGPCCGI.

The segment at 1–21 is disordered; sequence MTLFSSISSMSTSMSGSKSSI.

This sequence belongs to the hssA/B family.

This chain is HssA/B-like protein 39 (hssl39), found in Dictyostelium discoideum (Social amoeba).